The primary structure comprises 140 residues: Large ribosomal subunit protein uL16 (140 aa).

The span at 1 to 17 shows a compositional bias: basic residues; the sequence is MPLMPKRVKHRKMHRGS. The disordered stretch occupies residues 1–21; sequence MPLMPKRVKHRKMHRGSRSGN.

It belongs to the universal ribosomal protein uL16 family. As to quaternary structure, part of the 50S ribosomal subunit.

Binds 23S rRNA and is also seen to make contacts with the A and possibly P site tRNAs. The chain is Large ribosomal subunit protein uL16 from Akkermansia muciniphila (strain ATCC BAA-835 / DSM 22959 / JCM 33894 / BCRC 81048 / CCUG 64013 / CIP 107961 / Muc).